Consider the following 205-residue polypeptide: MSKRESAKYKIDRRLGENIWGRPKSPVNRREYGPGQHGQRRKGKLSDFGVQLRAKQKLKGFYGDISEKQFRKTYEEAARRKGDTGENLIGLLESRLDAVVYRAKFVPTIFAARQFINHGHVNVNGRRVNIQSYRLKVGDVVEVREKSKQLAIVLEAVQLAERDVPDYIDVDHNKMVATYNRVPGLSDVPYAVQMEPNLVVEFYSR.

Residues Ile-19 to Leu-45 form a disordered region. In terms of domain architecture, S4 RNA-binding spans Ser-94 to Val-157.

It belongs to the universal ribosomal protein uS4 family. Part of the 30S ribosomal subunit. Contacts protein S5. The interaction surface between S4 and S5 is involved in control of translational fidelity.

Functionally, one of the primary rRNA binding proteins, it binds directly to 16S rRNA where it nucleates assembly of the body of the 30S subunit. Its function is as follows. With S5 and S12 plays an important role in translational accuracy. The protein is Small ribosomal subunit protein uS4 of Brucella melitensis biotype 2 (strain ATCC 23457).